The sequence spans 991 residues: Translation initiation factor IF-2 (991 aa).

Disordered stretches follow at residues 53 to 85, 97 to 175, and 312 to 395; these read SHGT…KART, VKRD…EAAE, and GIKG…DRGG. Basic and acidic residues-rich tracts occupy residues 97–113 and 125–175; these read VKRD…HDSQ and ELQR…EAAE. A compositionally biased stretch (low complexity) spans 323–338; the sequence is AAGAPAPGAAPGAAAK. Residues 339–349 are compositionally biased toward basic and acidic residues; it reads PGEKKSVKSEK. Positions 491-658 constitute a tr-type G domain; the sequence is PRPPVVTVMG…QVLLQAEVLE (168 aa). The segment at 500-507 is G1; sequence GHVDHGKT. 500 to 507 lines the GTP pocket; that stretch reads GHVDHGKT. Positions 525–529 are G2; sequence GITQH. The segment at 546–549 is G3; it reads DTPG. GTP contacts are provided by residues 546–550 and 600–603; these read DTPGH and NKID. Residues 600–603 form a G4 region; that stretch reads NKID. The tract at residues 636-638 is G5; that stretch reads SAK.

Belongs to the TRAFAC class translation factor GTPase superfamily. Classic translation factor GTPase family. IF-2 subfamily.

The protein resides in the cytoplasm. In terms of biological role, one of the essential components for the initiation of protein synthesis. Protects formylmethionyl-tRNA from spontaneous hydrolysis and promotes its binding to the 30S ribosomal subunits. Also involved in the hydrolysis of GTP during the formation of the 70S ribosomal complex. This is Translation initiation factor IF-2 from Leptothrix cholodnii (strain ATCC 51168 / LMG 8142 / SP-6) (Leptothrix discophora (strain SP-6)).